Consider the following 307-residue polypeptide: Homoserine kinase (307 aa).

95 to 105 contacts ATP; sequence PQSRGLGSSAS.

It belongs to the GHMP kinase family. Homoserine kinase subfamily.

It localises to the cytoplasm. It catalyses the reaction L-homoserine + ATP = O-phospho-L-homoserine + ADP + H(+). It participates in amino-acid biosynthesis; L-threonine biosynthesis; L-threonine from L-aspartate: step 4/5. Catalyzes the ATP-dependent phosphorylation of L-homoserine to L-homoserine phosphate. The protein is Homoserine kinase of Corynebacterium aurimucosum (strain ATCC 700975 / DSM 44827 / CIP 107346 / CN-1) (Corynebacterium nigricans).